The chain runs to 262 residues: Pyridoxine 5'-phosphate synthase (262 aa).

Asn6 is a 3-amino-2-oxopropyl phosphate binding site. 8 to 9 contacts 1-deoxy-D-xylulose 5-phosphate; the sequence is DH. A 3-amino-2-oxopropyl phosphate-binding site is contributed by Arg17. His43 (proton acceptor) is an active-site residue. The 1-deoxy-D-xylulose 5-phosphate site is built by Arg45 and His50. Catalysis depends on Glu70, which acts as the Proton acceptor. 1-deoxy-D-xylulose 5-phosphate is bound at residue Thr102. The active-site Proton donor is the His215. 3-amino-2-oxopropyl phosphate contacts are provided by residues Gly216 and 237-238; that span reads GH.

The protein belongs to the PNP synthase family. Homooctamer; tetramer of dimers.

The protein localises to the cytoplasm. The enzyme catalyses 3-amino-2-oxopropyl phosphate + 1-deoxy-D-xylulose 5-phosphate = pyridoxine 5'-phosphate + phosphate + 2 H2O + H(+). It participates in cofactor biosynthesis; pyridoxine 5'-phosphate biosynthesis; pyridoxine 5'-phosphate from D-erythrose 4-phosphate: step 5/5. Functionally, catalyzes the complicated ring closure reaction between the two acyclic compounds 1-deoxy-D-xylulose-5-phosphate (DXP) and 3-amino-2-oxopropyl phosphate (1-amino-acetone-3-phosphate or AAP) to form pyridoxine 5'-phosphate (PNP) and inorganic phosphate. The polypeptide is Pyridoxine 5'-phosphate synthase (Helicobacter pylori (strain HPAG1)).